The chain runs to 1368 residues: Kinesin-like protein KIF24 (1368 aa).

One can recognise an SAM domain in the interval 1–64 (MASWLYECLC…FQLIKIIKIM (64 aa)). Positions 89–112 (ELRSGPRRQLNFDSPADNKDRNAS) are disordered. Phosphoserine occurs at positions 102 and 112. Residues 223-546 (KIRVCVRKRP…LRYADRVKEL (324 aa)) form the Kinesin motor domain. 313–320 (GQTGAGKT) lines the ATP pocket. S478 is modified (phosphoserine). Residues 478–709 (SLLALKECIR…STKCKKVQTV (232 aa)) are interaction with MPHOSPH9. Over residues 557 to 576 (TSRNRTSGNSSPKRIQSSPG) the composition is skewed to polar residues. Disordered regions lie at residues 557–584 (TSRN…DKCS) and 602–639 (GSTR…SPSQ). A Phosphoserine modification is found at S584. T621 is modified (phosphothreonine; by NEK2). S622 is modified (phosphoserine; by NEK2). Residue S646 is modified to Phosphoserine. 5 disordered regions span residues 651–670 (TVRS…PLCS), 729–753 (HRAE…WTNI), 792–849 (QYRP…NTLE), 864–938 (GPEK…LAEK), and 952–984 (RGGG…EEDG). Residues 819–830 (QVEELDDSDFSE) are compositionally biased toward acidic residues. Residues S826 and S829 each carry the phosphoserine modification. Composition is skewed to polar residues over residues 839 to 849 (QRATKQRNTLE) and 871 to 881 (ERQQSLFSSPR). A compositionally biased stretch (basic and acidic residues) spans 882-906 (TGDKKDLTKSWVDSRDPINHRRAAL). Residue S1012 is modified to Phosphoserine. 2 disordered regions span residues 1054–1073 (MSLL…QLVQ) and 1086–1148 (GGPV…SREA). Residues 1106–1119 (SSATRHLWLSSSPP) show a composition bias toward polar residues. Basic and acidic residues predominate over residues 1138 to 1148 (HPADKLPSREA).

It belongs to the TRAFAC class myosin-kinesin ATPase superfamily. Kinesin family. Interacts with CCP110, CEP97, TALPID3. Interacts with MPHOSPH9.

The protein resides in the cytoplasm. It is found in the cytoskeleton. Its subcellular location is the microtubule organizing center. It localises to the centrosome. The protein localises to the centriole. Its function is as follows. Microtubule-dependent motor protein that acts as a negative regulator of ciliogenesis by mediating recruitment of CCP110 to mother centriole in cycling cells, leading to restrict nucleation of cilia at centrioles. Mediates depolymerization of microtubules of centriolar origin, possibly to suppress aberrant cilia formation. Following activation by NEK2 involved in disassembly of primary cilium during G2/M phase but does not disassemble fully formed ciliary axonemes. As cilium assembly and disassembly is proposed to coexist in a dynamic equilibrium may suppress nascent cilium assembly and, potentially, ciliar re-assembly in cells that have already disassembled their cilia ensuring the completion of cilium removal in the later stages of the cell cycle. Plays an important role in recruiting MPHOSPH9, a negative regulator of cilia formation to the distal end of mother centriole. The protein is Kinesin-like protein KIF24 (KIF24) of Homo sapiens (Human).